The chain runs to 117 residues: Immunoglobulin lambda variable 1-51 (117 aa).

The N-terminal stretch at 1–19 (MTCSPLLLTLLIHCTGSWA) is a signal peptide. Glutamine 20 bears the Pyrrolidone carboxylic acid mark. Residues 20–44 (QSVLTQPPSVSAAPGQKVTISCSGS) are framework-1. Residues 20 to 117 (QSVLTQPPSV…CGTWDSSLSA (98 aa)) enclose the Ig-like domain. An intrachain disulfide couples cysteine 41 to cysteine 108. Positions 45–52 (SSNIGNNY) are complementarity-determining-1. Residues 53–69 (VSWYQQLPGTAPKLLIY) form a framework-2 region. The interval 70–72 (DNN) is complementarity-determining-2. Residues 73 to 108 (KRPSGIPDRFSGSKSGTSATLGITGLQTGDEADYYC) form a framework-3 region. The complementarity-determining-3 stretch occupies residues 109–117 (GTWDSSLSA).

Immunoglobulins are composed of two identical heavy chains and two identical light chains; disulfide-linked.

It localises to the secreted. Its subcellular location is the cell membrane. Its function is as follows. V region of the variable domain of immunoglobulin light chains that participates in the antigen recognition. Immunoglobulins, also known as antibodies, are membrane-bound or secreted glycoproteins produced by B lymphocytes. In the recognition phase of humoral immunity, the membrane-bound immunoglobulins serve as receptors which, upon binding of a specific antigen, trigger the clonal expansion and differentiation of B lymphocytes into immunoglobulins-secreting plasma cells. Secreted immunoglobulins mediate the effector phase of humoral immunity, which results in the elimination of bound antigens. The antigen binding site is formed by the variable domain of one heavy chain, together with that of its associated light chain. Thus, each immunoglobulin has two antigen binding sites with remarkable affinity for a particular antigen. The variable domains are assembled by a process called V-(D)-J rearrangement and can then be subjected to somatic hypermutations which, after exposure to antigen and selection, allow affinity maturation for a particular antigen. This Homo sapiens (Human) protein is Immunoglobulin lambda variable 1-51.